The sequence spans 252 residues: Autophagy-related protein 27 (252 aa).

A signal peptide spans 1–15; sequence MILASLLTFATAALA. Positions 16 to 161 constitute an MRH domain; sequence FDCSDKELER…SMKTKAACIT (146 aa). The Lumenal portion of the chain corresponds to 16–176; sequence FDCSDKELER…KKEKHDNGES (161 aa). Disulfide bonds link cysteine 18–cysteine 57, cysteine 66–cysteine 73, and cysteine 130–cysteine 159. An N-linked (GlcNAc...) asparagine glycan is attached at asparagine 49. Residues 177 to 197 traverse the membrane as a helical segment; sequence WGWFTWIFIFLVLFLSIYIIG. Over 198–252 the chain is Cytoplasmic; it reads GAWFQYNKGNAIDFQSALKEVVENFIELLKGLPSFGKEIIEKFTGRSNRGEYSAV.

The protein belongs to the ATG27 family.

It is found in the cytoplasmic vesicle membrane. The protein localises to the golgi apparatus membrane. Its subcellular location is the mitochondrion membrane. The protein resides in the preautophagosomal structure membrane. In terms of biological role, plays a key role in autophagy. Effector of VPS34 phosphatidylinositol 3-phosphate kinase signaling. Regulates the cytoplasm to vacuole transport (Cvt) vesicle formation. Plays a role in ATG protein retrieval from the pre-autophagosomal structure (PAS) and is especially required for autophagy-dependent cycling of ATG9. Finally, plays an important role in biofilm formation and resistance to antifungal compounds such as fluconazole, itraconazole, terbinafine and caspofungin. The polypeptide is Autophagy-related protein 27 (Candida albicans (strain SC5314 / ATCC MYA-2876) (Yeast)).